We begin with the raw amino-acid sequence, 382 residues long: ATP phosphoribosyltransferase regulatory subunit (382 aa).

It belongs to the class-II aminoacyl-tRNA synthetase family. HisZ subfamily. Heteromultimer composed of HisG and HisZ subunits.

It localises to the cytoplasm. It participates in amino-acid biosynthesis; L-histidine biosynthesis; L-histidine from 5-phospho-alpha-D-ribose 1-diphosphate: step 1/9. Functionally, required for the first step of histidine biosynthesis. May allow the feedback regulation of ATP phosphoribosyltransferase activity by histidine. The chain is ATP phosphoribosyltransferase regulatory subunit from Burkholderia multivorans (strain ATCC 17616 / 249).